The primary structure comprises 369 residues: Cytoplasmic tRNA 2-thiolation protein 1 (369 aa).

This sequence belongs to the TtcA family. CTU1/NCS6/ATPBD3 subfamily.

It localises to the cytoplasm. The protein operates within tRNA modification; 5-methoxycarbonylmethyl-2-thiouridine-tRNA biosynthesis. Functionally, plays a central role in 2-thiolation of mcm(5)S(2)U at tRNA wobble positions of tRNA(Lys), tRNA(Glu) and tRNA(Gln). Directly binds tRNAs and probably acts by catalyzing adenylation of tRNAs, an intermediate required for 2-thiolation. It is unclear whether it acts as a sulfurtransferase that transfers sulfur from thiocarboxylated URM1 onto the uridine of tRNAs at wobble position. Prior mcm(5) tRNA modification by the elongator complex is required for 2-thiolation. May also be involved in protein urmylation. This Meyerozyma guilliermondii (strain ATCC 6260 / CBS 566 / DSM 6381 / JCM 1539 / NBRC 10279 / NRRL Y-324) (Yeast) protein is Cytoplasmic tRNA 2-thiolation protein 1.